The primary structure comprises 504 residues: Anaerobic nitric oxide reductase transcription regulator NorR (504 aa).

At D57 the chain carries 4-aspartylphosphate. In terms of domain architecture, Sigma-54 factor interaction spans 187–416 (MIGLSPGMTQ…LEHAIHRAVV (230 aa)). ATP-binding positions include 215-222 (GETGTGKE) and 278-287 (ADNGTLFLDE). Positions 479–498 (WAACARMLETDVANLHRLAK) form a DNA-binding region, H-T-H motif.

It participates in nitrogen metabolism; nitric oxide reduction. Functionally, required for the expression of anaerobic nitric oxide (NO) reductase, acts as a transcriptional activator for at least the norVW operon. Activation also requires sigma-54. The polypeptide is Anaerobic nitric oxide reductase transcription regulator NorR (Escherichia coli O9:H4 (strain HS)).